The primary structure comprises 302 residues: Probable alpha-L-glutamate ligase (302 aa).

Positions 112 to 294 constitute an ATP-grasp domain; that stretch reads LQLLLKTGVP…IAAEIIDYIE (183 aa). ATP is bound by residues K148, 185–186, D194, and 218–220; these read DF and RAN. Mg(2+) contacts are provided by D255, E267, and N269. Positions 255, 267, and 269 each coordinate Mn(2+).

The protein belongs to the RimK family. The cofactor is Mg(2+). Requires Mn(2+) as cofactor.

This Haemophilus influenzae (strain 86-028NP) protein is Probable alpha-L-glutamate ligase.